Reading from the N-terminus, the 302-residue chain is Aspartate carbamoyltransferase catalytic subunit (302 aa).

2 residues coordinate carbamoyl phosphate: Arg-53 and Thr-54. L-aspartate is bound at residue Lys-82. Positions 103, 131, and 134 each coordinate carbamoyl phosphate. 2 residues coordinate L-aspartate: Arg-164 and Arg-223. Carbamoyl phosphate is bound by residues Leu-260 and Pro-261.

It belongs to the aspartate/ornithine carbamoyltransferase superfamily. ATCase family. As to quaternary structure, heterooligomer of catalytic and regulatory chains.

It catalyses the reaction carbamoyl phosphate + L-aspartate = N-carbamoyl-L-aspartate + phosphate + H(+). It functions in the pathway pyrimidine metabolism; UMP biosynthesis via de novo pathway; (S)-dihydroorotate from bicarbonate: step 2/3. In terms of biological role, catalyzes the condensation of carbamoyl phosphate and aspartate to form carbamoyl aspartate and inorganic phosphate, the committed step in the de novo pyrimidine nucleotide biosynthesis pathway. In Methanococcus vannielii (strain ATCC 35089 / DSM 1224 / JCM 13029 / OCM 148 / SB), this protein is Aspartate carbamoyltransferase catalytic subunit.